Here is a 751-residue protein sequence, read N- to C-terminus: Collagen alpha-1(XIII) chain (751 aa).

Residues 1–24 form a disordered region; the sequence is MVAERTRKAAASGSRGPGELGAPG. Residues 1 to 40 are Cytoplasmic-facing; it reads MVAERTRKAAASGSRGPGELGAPGPGTVALAEQCARLPSP. The nonhelical region 1 (NC1) stretch occupies residues 1 to 119; the sequence is MVAERTRKAA…KMSPGCNCPP (119 aa). Residues 15 to 24 are compositionally biased toward gly residues; the sequence is RGPGELGAPG. A helical; Signal-anchor for type II membrane protein membrane pass occupies residues 41–59; sequence GCCGLLALALCSLALSLLA. Over 60–751 the chain is Extracellular; that stretch reads HFRTAELQAR…GLPVQGCWNK (692 aa). Disordered regions lie at residues 108–127, 190–225, and 265–449; these read APKM…PTGR, PGHP…EYPH, and TFQG…EMVD. Over residues 116–125 the composition is skewed to pro residues; it reads NCPPGPPGPT. Residues 120 to 223 form a triple-helical region 1 (COL1) region; the sequence is GPPGPTGRPG…KGEKGQCGEY (104 aa). A compositionally biased stretch (low complexity) spans 204–213; sequence PRGQPGPQGQ. The segment covering 214–225 has biased composition (basic and acidic residues); sequence KGEKGQCGEYPH. The interval 224-273 is nonhelical region 2 (NC2); it reads PHREYPGGMLAALRSNPIMSLKLLPLLNSVRLAPPPVIKRRTFQGEQSQT. A triple-helical region 2 (COL2) region spans residues 274–445; sequence GIQGPPGPPG…KGAKGEPGKG (172 aa). 3 stretches are compositionally biased toward pro residues: residues 278 to 288, 296 to 312, and 391 to 402; these read PPGPPGPPGPS, LPGP…PGPK, and PGPPGLPGPPGP. Positions 403-436 are enriched in low complexity; that stretch reads KGEAGVDGQAGPPGQQGDKGQPGAAGEQGPSGPK. The span at 438–447 shows a compositional bias: basic and acidic residues; that stretch reads AKGEPGKGEM. Residues 446–467 are nonhelical region 3 (NC3); the sequence is EMVDYNGSINEALQEIRTLALM. Asn-451 carries an N-linked (GlcNAc...) asparagine glycan. Residues 466 to 751 are disordered; the sequence is LMGPPGLPGQ…GLPVQGCWNK (286 aa). The segment at 468-733 is triple-helical region 3 (COL3); sequence GPPGLPGQTG…KGDQGAPGLD (266 aa). The segment covering 470–484 has biased composition (pro residues); the sequence is PGLPGQTGPPGPPGT. Composition is skewed to basic and acidic residues over residues 499–509, 557–568, and 586–596; these read HDGDKGPRGKP, TGEKGEPGDEGR, and EKGEAGEKGDP. A compositionally biased stretch (pro residues) spans 601 to 613; the sequence is PGPPGPEGPPGPP. Low complexity predominate over residues 615–628; it reads LQGFPGPKGEAGLE. Over residues 630–643 the composition is skewed to basic and acidic residues; the sequence is SKGEKGSQGEKGDR. Positions 658–673 are enriched in pro residues; that stretch reads PGPPGTPGPIGVPGPA. Positions 684–699 are enriched in low complexity; the sequence is DPGMTGPTGAAGLPGL. Over residues 706–726 the composition is skewed to basic and acidic residues; that stretch reads KGNRGERGKKGSRGPKGDKGD. A nonhelical region 4 (NC4) region spans residues 734–751; sequence APCPLGEDGLPVQGCWNK.

In terms of assembly, homotrimer; disulfide-linked. Nucleation of the type XIII collagen triple helix is likely to occur at the N-terminal region with triple helix formation proceeding from the N- to the C-terminus. Interacts with FN1, perlecan/HSPG2 and NID2.

The protein localises to the cell membrane. The protein resides in the postsynaptic cell membrane. Involved in cell-matrix and cell-cell adhesion interactions that are required for normal development. May participate in the linkage between muscle fiber and basement membrane. May play a role in endochondral ossification of bone and branching morphogenesis of lung. Binds heparin. At neuromuscular junctions, may play a role in acetylcholine receptor clustering. The polypeptide is Collagen alpha-1(XIII) chain (Mus musculus (Mouse)).